The sequence spans 367 residues: Epoxide hydrolase 3 (367 aa).

Residues 21–41 (GVFFWVLVYVAALLAAVSYIP) form a helical membrane-spanning segment. Asp-173 (nucleophile) is an active-site residue. Tyr-285 (proton donor) is an active-site residue. Residue His-340 is the Proton acceptor of the active site.

The protein belongs to the AB hydrolase superfamily. Epoxide hydrolase family.

It localises to the microsome membrane. It catalyses the reaction an epoxide + H2O = an ethanediol. It carries out the reaction 9,10-epoxyoctadecanoate + H2O = 9,10-dihydroxyoctadecanoate. The enzyme catalyses 9,10-epoxy-(12Z)-octadecenoate + H2O = 9,10-dihydroxy-(12Z)-octadecenoate. The catalysed reaction is 8,9-epoxy-(5Z,11Z,14Z)-eicosatrienoate + H2O = 8,9-dihydroxy-(5Z,11Z,14Z)-eicosatrienoate. It catalyses the reaction 11,12-epoxy-(5Z,8Z,14Z)-eicosatrienoate + H2O = 11,12-dihydroxy-(5Z,8Z,14Z)-eicosatrienoate. It carries out the reaction 14,15-epoxy-(5Z,8Z,11Z)-eicosatrienoate + H2O = 14,15-dihydroxy-(5Z,8Z,11Z)-eicosatrienoate. Its activity is regulated as follows. Inhibited by 1-(1-acetylpiperidin-4-yl)-3-(4-(trifl uoromethoxy)phenyl)urea (TPAU), 1-cyclohexyl-3-dodecylurea (CDU), 12-(3-adamantan-1-yl-ureido)-dodecanoic acid (AUDA), 1-((3S, 5S, 7S)-adamantan-1-yl)-3-(5-(2-(2-ethoxyethoxy) ethoxy)pentyl)urea (AEPU) and to a lesser extent by 8-(3-((3S, 5S, 7S)-adamantan-1-yl)ureido) octanoic acid (AUOA). In terms of biological role, catalyzes the hydrolysis of epoxide-containing fatty acids. Active in vitro against epoxyeicosatrienoic acids (EETs) including 8,9-EET, 9,10-EET, 11,12-EET and 14,15-EET and leukotoxin. The protein is Epoxide hydrolase 3 (ephx3) of Xenopus tropicalis (Western clawed frog).